A 394-amino-acid polypeptide reads, in one-letter code: Large ribosomal subunit protein bL27m (394 aa).

The transit peptide at Met1–Thr34 directs the protein to the mitochondrion. Disordered stretches follow at residues Thr36–Lys57 and Ala145–Ser181. Positions Ala145–Gln170 are enriched in basic and acidic residues.

Belongs to the bacterial ribosomal protein bL27 family.

It is found in the mitochondrion. Functionally, component of the large subunit of mitochondrial ribosome. This is Large ribosomal subunit protein bL27m (MRPL2) from Debaryomyces hansenii (strain ATCC 36239 / CBS 767 / BCRC 21394 / JCM 1990 / NBRC 0083 / IGC 2968) (Yeast).